The following is a 394-amino-acid chain: Zinc-regulated GTPase metalloprotein activator 1 (394 aa).

Residues 16 to 23 carry the psi-PxLVp motif motif; it reads EDCPELVP. 48-55 contributes to the GTP binding site; sequence GYLGAGKT. Residues cysteine 106, cysteine 108, and cysteine 109 each coordinate Zn(2+). The CXCC motif signature appears at 106–109; that stretch reads CLCC. GTP is bound by residues 109–113 and 202–205; these read CSVKD and NKTD. Positions 272-375 constitute a CobW C-terminal domain; sequence IVTVTFDVPG…ILQQLFITAV (104 aa).

The protein belongs to the SIMIBI class G3E GTPase family. ZNG1 subfamily.

It localises to the nucleus. It catalyses the reaction GTP + H2O = GDP + phosphate + H(+). Functionally, zinc chaperone that directly transfers zinc cofactor to target metalloproteins, thereby activating them. Catalyzes zinc insertion into the active site of methionine aminopeptidase METAP1, which function to cleave the initiator methionine from polypeptides during or after protein translation. Mechanistically, the N-terminal psi-PxLVp motif binds to the C6H2-type zinc finger of inactive form of METAP1. After formation of the docked complex, zinc is transferred from the CXCC motif in the GTPase domain of ZNG1 to the zinc binding site in the peptidase domain of METAP1 in a process requiring GTP hydrolysis. GTP/GDP exchange is required for release of active METAP1. This Rattus norvegicus (Rat) protein is Zinc-regulated GTPase metalloprotein activator 1 (Zng1).